The primary structure comprises 187 residues: Ribosome-recycling factor (187 aa).

It belongs to the RRF family.

It localises to the cytoplasm. Responsible for the release of ribosomes from messenger RNA at the termination of protein biosynthesis. May increase the efficiency of translation by recycling ribosomes from one round of translation to another. The polypeptide is Ribosome-recycling factor (Methylorubrum populi (strain ATCC BAA-705 / NCIMB 13946 / BJ001) (Methylobacterium populi)).